Consider the following 1068-residue polypeptide: Cytospin-B (1068 aa).

The segment at 1–221 (MRSAAKPWNP…VDGTSVSPGD (221 aa)) is disordered. Residue Arg2 is the site of N-myristoyl glycine attachment. The span at 29–40 (SSGMKSSKSSTS) shows a compositional bias: low complexity. Phosphoserine is present on residues Ser38 and Ser55. Thr78 carries the phosphothreonine modification. A phosphoserine mark is found at Ser112, Ser131, Ser134, Ser137, and Ser138. A compositionally biased stretch (low complexity) spans 126 to 144 (SNPRKSVSSPTSSNTPTPT). Residue Thr142 is modified to Phosphothreonine. The span at 154–200 (PKQENEGGEKAALESQVRELLAEAKAKDSEINRLRSELKKYKEKRTL) shows a compositional bias: basic and acidic residues. 2 positions are modified to phosphoserine: Ser218 and Ser241. Composition is skewed to polar residues over residues 261 to 295 (PNSEGAASHTGDSSCPTSITQESSFGSPTGNQMSS), 309 to 323 (LRTSGSSSSDVTKAS), and 337 to 367 (ETPSRPLSSTSNPFKSSKCSTAGSSPNSVSE). The interval 261 to 367 (PNSEGAASHT…AGSSPNSVSE (107 aa)) is disordered. Ser361, Ser366, Ser369, and Ser425 each carry phosphoserine. A coiled-coil region spans residues 579 to 773 (EVQEMLKVAR…QKELGDVQGH (195 aa)). The disordered stretch occupies residues 777-796 (VTSRAAPPPVDEEPESSEVD). A phosphoserine mark is found at Ser847 and Ser863. 2 disordered regions span residues 859–885 (AAAVSPMQRHSTYSSVRPASRGVTQRL) and 898–922 (GRTETLKPDPHLRKSPSLESLSRPP). The segment covering 866-875 (QRHSTYSSVR) has biased composition (polar residues). Over residues 898–909 (GRTETLKPDPHL) the composition is skewed to basic and acidic residues. A phosphoserine mark is found at Ser912 and Ser914. Positions 912–922 (SPSLESLSRPP) are enriched in low complexity. Residues 962–1067 (GSKRNALLKW…YVAQIYKYFE (106 aa)) enclose the Calponin-homology (CH) domain.

It belongs to the cytospin-A family. In terms of tissue distribution, highly expressed in testis. Barely detectable in other tissues. Also highly expressed in some cancer cell lines.

The protein resides in the nucleus. Its subcellular location is the membrane. The sequence is that of Cytospin-B (SPECC1) from Homo sapiens (Human).